The sequence spans 2507 residues: Putative neurobeachin homolog (2507 aa).

3 disordered regions span residues 1–109 (MEIS…PPLP), 1307–1377 (PSSP…DGGR), and 1629–1649 (SRHE…EISE). A compositionally biased stretch (acidic residues) spans 24-37 (PVEEGEEVNDEESN). Residues 1317–1340 (TTQKQENSENVNSETSPENGSNGK) show a composition bias toward polar residues. The span at 1360 to 1372 (DGEEEENGEEGQG) shows a compositional bias: acidic residues. The BEACH-type PH domain occupies 1690–1798 (PSSQSACFST…AVKKVVYQLP (109 aa)). The 290-residue stretch at 1817 to 2106 (MTPRQLFKHS…QLLTEAHPPR (290 aa)) folds into the BEACH domain. WD repeat units follow at residues 2265 to 2308 (GHGD…GFIA), 2326 to 2365 (GHEA…LRRI), 2405 to 2444 (LVDD…KLYT), and 2447 to 2486 (PLNS…WHYE).

The protein belongs to the WD repeat neurobeachin family. In terms of assembly, interacts with RII subunit of PKA. As to expression, expressed in vulval precursor cells and rectal epithelia in L2 and L3 larvae. In L4 larvae, expression is seen in intestinal epithelial cells.

The protein resides in the cytoplasm. It localises to the membrane. It is found in the nucleus. Functionally, binds to type II regulatory subunits of protein kinase A and anchors/targets them to the membrane. May anchor the kinase to cytoskeletal and/or organelle-associated proteins. Regulates endosomal traffic in polarized epithelial cells such as the vulval precursor cells and intestinal cells. Thought to act as a negative regulator of lin-12 activity in vulval precursor cells. May have a role in the internalization process from basolateral surface of polarized epithelial cells. The polypeptide is Putative neurobeachin homolog (sel-2) (Caenorhabditis elegans).